The chain runs to 250 residues: Testis-expressed protein 101 (250 aa).

Residues 1–25 form the signal peptide; the sequence is MGACRIQYILLVFLLIASHWTLVQN. N-linked (GlcNAc...) asparagine glycans are attached at residues N45, N110, N134, and N160. Residues 141-215 enclose the UPAR/Ly6 domain; sequence CPTCLALEPC…VKETCSYQSF (75 aa). G224 carries the GPI-anchor amidated glycine lipid modification. Residues 225-250 constitute a propeptide, removed in mature form; that stretch reads ASWMPTSLWVLELLLPALSLPLIYFP.

Interacts with VAMP3. Interacts with LY6K. Interacts with DPEP3; co-localized on the cell surface of spermatocytes, spermatids, and testicular spermatozoa, co-localized only in cytoplasmic droplets of caput and corpus epididymal sperm. Interacts with ADAM5. N-glycosylated; by high mannose and/or biantennary complex and/or certain types of hybrid oligosaccharides; possesses different oligosaccharides chains according to its subcellular localization in the testis. Post-translationally, sheds from membrane raft by ACE and released from the cell surface of epididymal sperm while it passes through the caput epididymis leading to disappearance of TEX101 on spermatozoa; is essential to produce fertile spermatozoa. Detected in testis.

It localises to the cell membrane. It is found in the membrane raft. The protein localises to the cytoplasmic vesicle. The protein resides in the secretory vesicle. Its subcellular location is the acrosome. It localises to the secreted. Functionally, plays a role in fertilization by controlling binding of sperm to zona pellucida and migration of spermatozoa into the oviduct. May play a role in signal transduction and promote protein tyrosine phosphorylation. The sequence is that of Testis-expressed protein 101 from Rattus norvegicus (Rat).